A 135-amino-acid chain; its full sequence is Large ribosomal subunit protein uL16c (135 aa).

Belongs to the universal ribosomal protein uL16 family. Part of the 50S ribosomal subunit.

It localises to the plastid. The protein resides in the chloroplast. The chain is Large ribosomal subunit protein uL16c from Vitis vinifera (Grape).